An 88-amino-acid polypeptide reads, in one-letter code: Prolevitide (88 aa).

Residues Met1–Ala20 form the signal peptide. Gln74 carries the pyrrolidone carboxylic acid modification. Gln87 is modified (glutamine amide).

This sequence belongs to the gastrin/cholecystokinin family. In terms of tissue distribution, expressed by the skin glands.

It localises to the secreted. This is Prolevitide from Xenopus laevis (African clawed frog).